The primary structure comprises 221 residues: GTP-binding nuclear protein Ran-B1 (221 aa).

Residues 10-174 (DYPSFKLVIV…LYLARKLAGD (165 aa)) enclose the Small GTPase Ran-type domain. 21 to 28 (DGGTGKTT) provides a ligand contact to GTP. Residues 40-48 (KKYEPTIGV) are switch-I. GTP contacts are provided by residues glycine 71, 125–128 (NKVD), and 153–155 (SAK). A switch-II region spans residues 71-87 (GQEKFGGLRDGYYIHGQ).

The protein belongs to the small GTPase superfamily. Ran family. Found in a nuclear export complex with RanGTP, exportin and pre-miRNA.

Its subcellular location is the nucleus. Functionally, GTP-binding protein involved in nucleocytoplasmic transport. Required for the import of protein into the nucleus and also for RNA export. Involved in chromatin condensation and control of cell cycle. The sequence is that of GTP-binding nuclear protein Ran-B1 (RAN-B1) from Nicotiana tabacum (Common tobacco).